Here is a 217-residue protein sequence, read N- to C-terminus: 3,4-dihydroxy-2-butanone 4-phosphate synthase (217 aa).

D-ribulose 5-phosphate-binding positions include 37-38 (RE), Asp-42, 150-154 (RGGHT), and Glu-174. Glu-38 lines the Mg(2+) pocket. A Mg(2+)-binding site is contributed by His-153.

It belongs to the DHBP synthase family. Homodimer. Mg(2+) is required as a cofactor. It depends on Mn(2+) as a cofactor.

The catalysed reaction is D-ribulose 5-phosphate = (2S)-2-hydroxy-3-oxobutyl phosphate + formate + H(+). It functions in the pathway cofactor biosynthesis; riboflavin biosynthesis; 2-hydroxy-3-oxobutyl phosphate from D-ribulose 5-phosphate: step 1/1. Its function is as follows. Catalyzes the conversion of D-ribulose 5-phosphate to formate and 3,4-dihydroxy-2-butanone 4-phosphate. In Proteus mirabilis (strain HI4320), this protein is 3,4-dihydroxy-2-butanone 4-phosphate synthase.